Here is a 217-residue protein sequence, read N- to C-terminus: Large ribosomal subunit protein bL25 (217 aa).

Positions 187–217 are disordered; it reads STPSGLEVEEETGEEESAEPEVIEKGKKEEE. The segment covering 193 to 207 has biased composition (acidic residues); that stretch reads EVEEETGEEESAEPE. Residues 208–217 are compositionally biased toward basic and acidic residues; it reads VIEKGKKEEE.

Belongs to the bacterial ribosomal protein bL25 family. CTC subfamily. Part of the 50S ribosomal subunit; part of the 5S rRNA/L5/L18/L25 subcomplex. Contacts the 5S rRNA. Binds to the 5S rRNA independently of L5 and L18.

This is one of the proteins that binds to the 5S RNA in the ribosome where it forms part of the central protuberance. This Thermosipho africanus (strain TCF52B) protein is Large ribosomal subunit protein bL25.